Consider the following 319-residue polypeptide: MISRLLQNNLMSVDPVSSQAMELSDVTLIEGVGNEVMVVAGVVALTLALVLAWLSTYVADSGNNQLLGTIVSAGDTSVLHLGHVDQLVNQGTPEPTEHPHPSGGNDDKAEETSDSGGDATGEPGARGEMEPSLEHLLDIQGLPKRQAGLGSSRPEAPLGLDDGSCLSPSPSLINVRLKFLNDTEELAVARPEDTVGTLKSKYFPGQESQMKLIYQGRLLQDPARTLSSLNITNNCVIHCHRSPPGAAVSGPSASLTPTTEQSSLGVNVGSLMVPVFVVLLGVVWYFRINYRQFFTGPATISLVGVTVFFSILVFGMYGR.

Residues 36 to 56 (VMVVAGVVALTLALVLAWLST) form a helical membrane-spanning segment. Disordered regions lie at residues 88 to 128 (VNQG…ARGE) and 145 to 165 (RQAG…DGSC). Residues 95–111 (PTEHPHPSGGNDDKAEE) are compositionally biased toward basic and acidic residues. A Ubiquitin-like domain is found at 173–246 (INVRLKFLND…IHCHRSPPGA (74 aa)). The next 2 membrane-spanning stretches (helical) occupy residues 264 to 284 (LGVN…GVVW) and 298 to 318 (ATIS…GMYG).

The protein localises to the membrane. The chain is Transmembrane and ubiquitin-like domain-containing protein 2 (Tmub2) from Mus musculus (Mouse).